The following is a 37-amino-acid chain: Potassium channel toxin alpha-KTx 11.1 (37 aa).

Intrachain disulfides connect Cys-8–Cys-27, Cys-13–Cys-33, and Cys-17–Cys-35.

This sequence belongs to the short scorpion toxin superfamily. Potassium channel inhibitor family. Alpha-KTx 11 subfamily. Expressed by the venom gland.

It is found in the secreted. Functionally, binds and inhibits voltage-sensitive potassium channels. Inhibits the vertebrate potassium channels Kv1.1/KCNA1, Kv1.2/KCNA2 and Kv1.3/KCNA3 with low affinity. Also weakly inhibits Kv7.1/KCNQ1 (10 uM of the toxin inhibits currents by 21.43%). The sequence is that of Potassium channel toxin alpha-KTx 11.1 from Parabuthus villosus (Black hairy thick-tailed scorpion).